Consider the following 189-residue polypeptide: Protein GrpE (189 aa).

Over residues 1 to 14 (MTEKNEEVVEDKNI) the composition is skewed to basic and acidic residues. A disordered region spans residues 1 to 38 (MTEKNEEVVEDKNISDQTDENLTEEIESEADDLQVEPD). Acidic residues predominate over residues 17–35 (QTDENLTEEIESEADDLQV).

It belongs to the GrpE family. Homodimer.

It is found in the cytoplasm. Participates actively in the response to hyperosmotic and heat shock by preventing the aggregation of stress-denatured proteins, in association with DnaK and GrpE. It is the nucleotide exchange factor for DnaK and may function as a thermosensor. Unfolded proteins bind initially to DnaJ; upon interaction with the DnaJ-bound protein, DnaK hydrolyzes its bound ATP, resulting in the formation of a stable complex. GrpE releases ADP from DnaK; ATP binding to DnaK triggers the release of the substrate protein, thus completing the reaction cycle. Several rounds of ATP-dependent interactions between DnaJ, DnaK and GrpE are required for fully efficient folding. The chain is Protein GrpE from Leuconostoc mesenteroides subsp. mesenteroides (strain ATCC 8293 / DSM 20343 / BCRC 11652 / CCM 1803 / JCM 6124 / NCDO 523 / NBRC 100496 / NCIMB 8023 / NCTC 12954 / NRRL B-1118 / 37Y).